The chain runs to 62 residues: Inner membrane protein p12 (62 aa).

The helical transmembrane segment at 16–36 (LLIVAIIVVIMAIMLYYFWWM) threads the bilayer.

The protein belongs to the asfivirus inner membrane protein p12 family. As to quaternary structure, homomultimer; disulfide-linked. Post-translationally, not glycosylated.

The protein resides in the virion membrane. The polypeptide is Inner membrane protein p12 (African swine fever virus (isolate Tick/Malawi/Lil 20-1/1983) (ASFV)).